Reading from the N-terminus, the 604-residue chain is Aspartate--tRNA(Asp/Asn) ligase (604 aa).

Glu175 provides a ligand contact to L-aspartate. Residues 199-202 (QQFK) form an aspartate region. Positions 221 and 456 each coordinate L-aspartate. Residue 221–223 (RDE) coordinates ATP. Position 496 (Glu496) interacts with ATP. Arg503 is a binding site for L-aspartate. 548–551 (GVDR) lines the ATP pocket.

It belongs to the class-II aminoacyl-tRNA synthetase family. Type 1 subfamily. As to quaternary structure, homodimer.

The protein localises to the cytoplasm. The enzyme catalyses tRNA(Asx) + L-aspartate + ATP = L-aspartyl-tRNA(Asx) + AMP + diphosphate. Its function is as follows. Aspartyl-tRNA synthetase with relaxed tRNA specificity since it is able to aspartylate not only its cognate tRNA(Asp) but also tRNA(Asn). Reaction proceeds in two steps: L-aspartate is first activated by ATP to form Asp-AMP and then transferred to the acceptor end of tRNA(Asp/Asn). In Methylorubrum extorquens (strain CM4 / NCIMB 13688) (Methylobacterium extorquens), this protein is Aspartate--tRNA(Asp/Asn) ligase.